Here is a 218-residue protein sequence, read N- to C-terminus: MLGGTFDPIHDGHLALARRFAELLGLTELVLLPAGQPYQKRDVSAAEHRLAMTRAAAGSLSMPGVTVTVATDEIEHVGPTYTVETLARWRERIGPDASLSLLIGADQLVRLDTWRDWRKLFDYAHICVSTRPGFDLGAAPPDVAQEITARQAGADVLKATSAGHLLIDTTLSFDIAATDIRAHLRECIARHAQMPDASAEHVPAAVWAYILQHRLYHS.

Belongs to the NadD family.

The enzyme catalyses nicotinate beta-D-ribonucleotide + ATP + H(+) = deamido-NAD(+) + diphosphate. It participates in cofactor biosynthesis; NAD(+) biosynthesis; deamido-NAD(+) from nicotinate D-ribonucleotide: step 1/1. Catalyzes the reversible adenylation of nicotinate mononucleotide (NaMN) to nicotinic acid adenine dinucleotide (NaAD). The protein is Probable nicotinate-nucleotide adenylyltransferase of Burkholderia lata (strain ATCC 17760 / DSM 23089 / LMG 22485 / NCIMB 9086 / R18194 / 383).